Reading from the N-terminus, the 555-residue chain is Transcription factor kojR (555 aa).

A DNA-binding region (zn(2)-C6 fungal-type) is located at residues 21-47 (CETCKLRKRKCDGHEPCTYCLRYEYQC). The interval 51–73 (PHPRRKPAASKSSARPSEEEDSP) is disordered.

It localises to the nucleus. Functionally, transcription factor that regulates the gene cluster that mediates the biosynthesis of 5-hydroxy-2-hydroxymethyl-1,4-pyrone, also know as kojic acid, a by-product in the fermentation process of malting rice that acts as a chelation agent. Negatively regulates the expression of the kojic acid-related protein kap1. Improves the antioxidant capacity via the accumulation of kojic acid that is also a strong oxidant. In Aspergillus oryzae (strain ATCC 42149 / RIB 40) (Yellow koji mold), this protein is Transcription factor kojR.